Reading from the N-terminus, the 141-residue chain is Calcium-binding protein SPEC 2D (141 aa).

4 EF-hand domains span residues 10 to 42 (DQIK…MKSV), 43 to 72 (GHVL…AMIL), 73 to 107 (DKKC…FDRQ), and 108 to 141 (ITED…MNFC). D23, N25, D27, and N29 together coordinate Ca(2+). Ca(2+) is bound by residues D84, D86, K90, D95, D121, D125, K127, and E132.

Found in cell lineages giving rise to the aboral ectoderm, a squamous epithelium covering the surface of the late stage embryo and larva.

Its function is as follows. Calcium-binding protein involved in larval development and metamorphosis. Likely to function as calcium buffers mediating the transport of calcium from the sea water to the blastocoel where calcium is required for skeleton formation. The protein is Calcium-binding protein SPEC 2D (SPEC2D) of Strongylocentrotus purpuratus (Purple sea urchin).